A 70-amino-acid polypeptide reads, in one-letter code: Waprin-Thr1 (70 aa).

A signal peptide spans 1–19 (MKARLLLLSVVILVGMVSA). One can recognise a WAP domain in the interval 20–70 (ENEKAGSCPDVNQPIPPLGLCRNMCESDSGCPNNEKCCKNGCGFMTCSRPR). 4 disulfides stabilise this stretch: cysteine 27–cysteine 57, cysteine 40–cysteine 61, cysteine 44–cysteine 56, and cysteine 50–cysteine 66.

This sequence belongs to the venom waprin family. In terms of tissue distribution, expressed by the venom gland.

The protein resides in the secreted. Functionally, damages membranes of susceptible bacteria. Has no hemolytic activity. Not toxic to mice. Does not inhibit the proteinases elastase and cathepsin G. In Thrasops jacksonii (Jackson's black tree snake), this protein is Waprin-Thr1.